We begin with the raw amino-acid sequence, 201 residues long: Eukaryotic translation initiation factor 4E-5 (201 aa).

Residues Cys122 and Cys126 are joined by a disulfide bond.

Belongs to the eukaryotic initiation factor 4E family. EIF4F is a multi-subunit complex, the composition of which varies with external and internal environmental conditions. It is composed of at least eIF4A, eIF4E and eIF4G. eIF4E is also known to interact with other partners. Enriched in the germline.

In terms of biological role, recognizes and binds the 7-methylguanosine-containing mRNA cap during an early step in the initiation of protein synthesis and facilitates ribosome binding by inducing the unwinding of the mRNAs secondary structures. All 5 eIF4E proteins bind monomethyl cap structures. Only ife-1, ife-2 and ife-5 bind trimethyl cap structures which result from trans-splicing. Translation of trimethyl cap structure mRNAs may be regulated by intracellular redox state; disulfide bonds change the width and depth of the cap-binding cavity determining selectivity to mRNA caps. In Caenorhabditis elegans, this protein is Eukaryotic translation initiation factor 4E-5 (ife-5).